A 192-amino-acid chain; its full sequence is Transmembrane protein 276 (192 aa).

A signal peptide spans 1 to 32; it reads MVSKPRTEWSTVLSHLVLAGVSLHAAVSSVQS. The next 4 membrane-spanning stretches (helical) occupy residues 35–55, 63–83, 92–112, and 114–134; these read GAAAGFLLQTFAAIIMLAPGP, AGAWVATVIGLPLLAFDFHWV, LLLGGGMVLAVAGDHLGPEGC, and VAGQAVLLVVAVTILIVAVFT.

Its subcellular location is the membrane. The chain is Transmembrane protein 276 from Mus musculus (Mouse).